The following is a 315-amino-acid chain: Putative purine nucleoside phosphorylase (315 aa).

Phosphate is bound by residues S49, H81, R103–H105, and A135. E220 provides a ligand contact to a purine D-ribonucleoside. S239 contacts phosphate. N262 serves as a coordination point for a purine D-ribonucleoside.

It belongs to the PNP/MTAP phosphorylase family.

The protein resides in the cytoplasm. It localises to the nucleus. It carries out the reaction a purine D-ribonucleoside + phosphate = a purine nucleobase + alpha-D-ribose 1-phosphate. The protein operates within purine metabolism; purine nucleoside salvage. In terms of biological role, the purine nucleoside phosphorylases catalyze the phosphorolytic breakdown of the N-glycosidic bond in the beta-(deoxy)ribonucleoside molecules, with the formation of the corresponding free purine bases and pentose-1-phosphate. Cleaves guanosine and inosine. The polypeptide is Putative purine nucleoside phosphorylase (Schizosaccharomyces pombe (strain 972 / ATCC 24843) (Fission yeast)).